A 267-amino-acid polypeptide reads, in one-letter code: Large ribosomal subunit protein bL9m (267 aa).

Residues 1 to 52 (MAALVVTEPGRALLRAGTERLLRGGIQELLRPRHEGNSPGLARDFSLSQNRG) constitute a mitochondrion transit peptide.

The protein belongs to the bacterial ribosomal protein bL9 family. As to quaternary structure, component of the mitochondrial ribosome large subunit (39S) which comprises a 16S rRNA and about 50 distinct proteins.

It localises to the mitochondrion. This Papio anubis (Olive baboon) protein is Large ribosomal subunit protein bL9m (MRPL9).